The following is a 248-amino-acid chain: Polyhedrin (248 aa).

Residues 1-27 form the signal peptide; the sequence is MADVAGTSNRDFRGREQRLFNSEQYNY. N-linked (GlcNAc...) asparagine; by host glycosylation is found at N28, N77, N86, and N237.

Its subcellular location is the host cytoplasm. In terms of biological role, major component of the virus occlusion bodies, which are large proteinaceous structures (polyhedra), that protect the virus from the outside environment for extended periods until they are ingested by insect larvae. This Bombyx mori cytoplasmic polyhedrosis virus (BmCPV) protein is Polyhedrin.